The chain runs to 545 residues: uncharacterized protein (545 aa).

Positions 1 to 10 are enriched in basic residues; that stretch reads MSRYRFRKAR. The interval 1–25 is disordered; sequence MSRYRFRKARSNWPMGQNDSRWEPP. 2 WD repeats span residues 417–456 and 460–501; these read ACNT…NPMM and GHSN…MLCS.

This is an uncharacterized protein from Caenorhabditis elegans.